The following is a 217-amino-acid chain: Very-long-chain (3R)-3-hydroxyacyl-CoA dehydratase PHS1 (217 aa).

The Cytoplasmic portion of the chain corresponds to 1 to 11; it reads MSKKLASPLSF. Residues 12 to 29 traverse the membrane as a helical segment; sequence LPLYNLLSAVGWSYLLYL. Residues 30 to 47 lie on the Lumenal side of the membrane; the sequence is VISLYPKVGQPAFFYQTK. The helical transmembrane segment at 48-66 threads the bilayer; sequence NVATLVQCGAIIEIINSFL. At 67-76 the chain is on the cytoplasmic side; that stretch reads GVVRSPLLTT. A helical transmembrane segment spans residues 77 to 94; sequence VAQVSSRLLVVLGIFQLL. The Lumenal segment spans residues 95 to 99; sequence PNTSG. The helical transmembrane segment at 100-117 threads the bilayer; the sequence is VQSVVYISLLLAWSITEI. Residues 118-142 are Cytoplasmic-facing; the sequence is VRYLYYFFMLVFKNGAPKILILLRY. The helical transmembrane segment at 143–160 threads the bilayer; sequence NLFWILYPTGVASELRII. Active-site residues include Y149 and E156. Over 161-178 the chain is Lumenal; the sequence is YCALNAAESQYSLLYKRI. Residues 179-196 traverse the membrane as a helical segment; that stretch reads LIAAMLAYIPGFPMLFLH. Topologically, residues 197–217 are cytoplasmic; sequence MVAQRKKVMKSLRSSFGKKLI. The Endoplasmic reticulum retention signal signature appears at 214–217; the sequence is KKLI.

This sequence belongs to the very long-chain fatty acids dehydratase HACD family.

Its subcellular location is the endoplasmic reticulum membrane. It localises to the vacuole membrane. It catalyses the reaction a very-long-chain (3R)-3-hydroxyacyl-CoA = a very-long-chain (2E)-enoyl-CoA + H2O. It carries out the reaction (3R)-hydroxyeicosanoyl-CoA = (2E)-eicosenoyl-CoA + H2O. The catalysed reaction is (3R)-hydroxydocosanoyl-CoA = (2E)-docosenoyl-CoA + H2O. The enzyme catalyses (3R)-hydroxyoctadecanoyl-CoA = (2E)-octadecenoyl-CoA + H2O. It catalyses the reaction (3R)-hydroxytetracosanoyl-CoA = (2E)-tetracosenoyl-CoA + H2O. It carries out the reaction (3R)-hydroxyhexacosanoyl-CoA = (2E)-hexacosenoyl-CoA + H2O. The catalysed reaction is (3R)-hydroxyhexadecanoyl-CoA = (2E)-hexadecenoyl-CoA + H2O. The protein operates within lipid metabolism; fatty acid biosynthesis. Its function is as follows. Catalyzes the third of the four reactions of the long-chain fatty acids elongation cycle. This endoplasmic reticulum-bound enzymatic process, allows the addition of two carbons to the chain of long- and very long-chain fatty acids/VLCFAs per cycle. This enzyme catalyzes the dehydration of the 3-hydroxyacyl-CoA intermediate into trans-2,3-enoyl-CoA, within each cycle of fatty acid elongation. Thereby, it participates in the production of VLCFAs of different chain lengths that are involved in multiple biological processes as precursors of membrane lipids and lipid mediators. This chain is Very-long-chain (3R)-3-hydroxyacyl-CoA dehydratase PHS1 (PHS1), found in Saccharomyces cerevisiae (strain ATCC 204508 / S288c) (Baker's yeast).